The chain runs to 282 residues: Ammonia transport outward protein 2 (282 aa).

A disordered region spans residues 1–34 (MSDREQSSGNTAFENPKALDSSEGEFISENNDQS). Serine 2 carries the N-acetylserine modification. Serine 2, serine 7, serine 21, serine 22, serine 28, and serine 40 each carry phosphoserine. Over 2–86 (SDREQSSGNT…GLAPAPVHKF (85 aa)) the chain is Extracellular. Residues 87 to 107 (ANPAPLGLSGFALTTFVLSMF) form a helical membrane-spanning segment. The Cytoplasmic portion of the chain corresponds to 108–119 (NARAQGITIPNV). Residues 120–140 (VVGCAMFYGGLVQLIAGIWEI) traverse the membrane as a helical segment. The Extracellular portion of the chain corresponds to 141–150 (ALENTFGGTA). The chain crosses the membrane as a helical span at residues 151 to 171 (LCSFGGFWLSFGAIYIPWFGI). Over 172 to 184 (LDAYKDKESDLGN) the chain is Cytoplasmic. The chain crosses the membrane as a helical span at residues 185 to 205 (ALGFYLLGWALFTFGLSVCTM). At 206–207 (KS) the chain is on the extracellular side. The chain crosses the membrane as a helical span at residues 208-228 (TIMFFALFFLLAVTFLLLSIA). At 229–238 (NFTGEVGVTR) the chain is on the cytoplasmic side. The helical transmembrane segment at 239–259 (AGGVLGVIVAFIAWYNAYAGI) threads the bilayer. Topologically, residues 260–282 (ATRQNSYIMVHPFALPSNDKVFF) are extracellular.

It belongs to the acetate uptake transporter (AceTr) (TC 2.A.96) family.

Its subcellular location is the cell membrane. Its function is as follows. Transporter protein required for ammonia export. Involved in acetate resistance. The protein is Ammonia transport outward protein 2 (ATO2) of Saccharomyces cerevisiae (strain ATCC 204508 / S288c) (Baker's yeast).